Here is a 342-residue protein sequence, read N- to C-terminus: Nucleoid-associated protein Shewmr7_2293 (342 aa).

It belongs to the YejK family.

It is found in the cytoplasm. The protein localises to the nucleoid. The sequence is that of Nucleoid-associated protein Shewmr7_2293 from Shewanella sp. (strain MR-7).